The chain runs to 175 residues: Homeobox expressed in ES cells 1 (175 aa).

The disordered stretch occupies residues 1-44 (MSPNLQEGARLVEGKPSSTSFSIESILGLDQKKDDAPSMKPHRP). The segment at residues 108–167 (GRRPRTAFTQNQVEVLENVFRVNCYPGIDIREDLARKLNLEEDRIQIWFQNRRAKLKRSH) is a DNA-binding region (homeobox).

This sequence belongs to the ANF homeobox family. Interacts with TLE1.

It localises to the nucleus. Functionally, required for the normal development of the forebrain, eyes and other anterior structures such as the olfactory placodes and pituitary gland. Possible transcriptional repressor. Binds to the palindromic PIII sequence, 5'-AGCTTGAGTCTAATTGAATTAACTGTAC-3'. The polypeptide is Homeobox expressed in ES cells 1 (HESX1) (Oryctolagus cuniculus (Rabbit)).